Here is a 293-residue protein sequence, read N- to C-terminus: Elongation factor Ts (293 aa).

The segment at 79 to 82 (TDFV) is involved in Mg(2+) ion dislocation from EF-Tu.

Belongs to the EF-Ts family.

The protein localises to the cytoplasm. Associates with the EF-Tu.GDP complex and induces the exchange of GDP to GTP. It remains bound to the aminoacyl-tRNA.EF-Tu.GTP complex up to the GTP hydrolysis stage on the ribosome. In Exiguobacterium sibiricum (strain DSM 17290 / CCUG 55495 / CIP 109462 / JCM 13490 / 255-15), this protein is Elongation factor Ts.